A 249-amino-acid chain; its full sequence is Transmembrane protein 51 (249 aa).

A run of 2 helical transmembrane segments spans residues 17–37 (IGLG…VPGF) and 64–84 (VAYV…CLSI). 3 disordered regions span residues 95–126 (ELAR…SRYY), 161–199 (TGLD…PLKV), and 213–249 (RITL…RPPD). The span at 99 to 108 (IQQQAGTVPH) shows a compositional bias: polar residues. 4 positions are modified to phosphoserine: Ser-109, Ser-114, Ser-178, and Ser-188. Over residues 167-178 (TPTSTRAETETS) the composition is skewed to polar residues. Over residues 190 to 199 (LAKRLKPLKV) the composition is skewed to basic residues. The span at 220–234 (NVPPPSIEPLTPPPL) shows a compositional bias: pro residues.

Its subcellular location is the membrane. This chain is Transmembrane protein 51 (Tmem51), found in Mus musculus (Mouse).